The sequence spans 233 residues: MIDHNIRTGKAFFGRRKGKRLRNSQLVLIKKLFPTLDINLNNSVPLNLTSLFSRKVKEVRLEIGFGGGEHLLHEMKHFPQTGFIGIEPFINGMAKMLMSLEEHKQYQNQLRLYNDDATGLLDWLPNASLDGIDLFYPDPWPKKKHWKRRFINMKNLNRFARVLKTGKKFRFASDIESYVNWTLYHCSNHHSFEWEAKNPKDWKTPYTLWSGTRYEAKALREGRAPTYLTFIKK.

Residues E62, E87, D116, and D138 each coordinate S-adenosyl-L-methionine. The active site involves D138. Residues K142, D174, and 212–215 each bind substrate; that span reads TRYE.

Belongs to the class I-like SAM-binding methyltransferase superfamily. TrmB family.

It carries out the reaction guanosine(46) in tRNA + S-adenosyl-L-methionine = N(7)-methylguanosine(46) in tRNA + S-adenosyl-L-homocysteine. The protein operates within tRNA modification; N(7)-methylguanine-tRNA biosynthesis. Functionally, catalyzes the formation of N(7)-methylguanine at position 46 (m7G46) in tRNA. This Bartonella henselae (strain ATCC 49882 / DSM 28221 / CCUG 30454 / Houston 1) (Rochalimaea henselae) protein is tRNA (guanine-N(7)-)-methyltransferase.